The primary structure comprises 233 residues: Small ribosomal subunit protein uS3 (233 aa).

The KH type-2 domain occupies 39 to 107; the sequence is VRTFLTKELK…PAQINISEVR (69 aa).

Belongs to the universal ribosomal protein uS3 family. In terms of assembly, part of the 30S ribosomal subunit. Forms a tight complex with proteins S10 and S14.

Its function is as follows. Binds the lower part of the 30S subunit head. Binds mRNA in the 70S ribosome, positioning it for translation. The chain is Small ribosomal subunit protein uS3 from Pseudoalteromonas translucida (strain TAC 125).